The chain runs to 363 residues: Cytoplasmic tRNA 2-thiolation protein 1 (363 aa).

Residues aspartate 337–phenylalanine 363 are disordered.

This sequence belongs to the TtcA family. CTU1/NCS6/ATPBD3 subfamily.

The protein localises to the cytoplasm. The protein operates within tRNA modification; 5-methoxycarbonylmethyl-2-thiouridine-tRNA biosynthesis. Plays a central role in 2-thiolation of mcm(5)S(2)U at tRNA wobble positions of tRNA(Lys), tRNA(Glu) and tRNA(Gln). Directly binds tRNAs and probably acts by catalyzing adenylation of tRNAs, an intermediate required for 2-thiolation. It is unclear whether it acts as a sulfurtransferase that transfers sulfur from thiocarboxylated URM1 onto the uridine of tRNAs at wobble position. This chain is Cytoplasmic tRNA 2-thiolation protein 1, found in Oryza sativa subsp. japonica (Rice).